Consider the following 721-residue polypeptide: Homeobox-leucine zipper protein HDG2 (721 aa).

Residues 17–70 (NNHNYNHEDNNNEGFLRDDEFDSPNTKSGSENQEGGSGNDQDPLHPNKKKRYHR) form a disordered region. Positions 21–34 (YNHEDNNNEGFLRD) are enriched in basic and acidic residues. Residues 64–123 (KKKRYHRHTQLQIQEMEAFFKECPHPDDKQRKQLSRELNLEPLQVKFWFQNKRTQMKNHH) constitute a DNA-binding region (homeobox). Positions 120-194 (KNHHERHENS…DRISAIAAKY (75 aa)) form a coiled coil. Residues 242–468 (TESDKPVIID…LDRQCERLAS (227 aa)) enclose the START domain.

The protein belongs to the HD-ZIP homeobox family. Class IV subfamily. In terms of assembly, interacts with AIL7/PLT7, ANT, BBM and AIL1. In terms of tissue distribution, expressed in hairless cell files of the hypocotyl epidermis. Expressed in shoot apical meristem (SAM) with higher levels in L1 cells and the epidermal layer of young leaves. Expressed in primary root tips, in the L1 of apical inflorescence meristems, early flower primordia, carpel epidermis, ovule primordia, nucellus, chalaze and seed coat.

It is found in the nucleus. Its function is as follows. Probable transcription factor. Involved, together with PDF2, in the regulation of flower organs development by promoting the expression of APETALA 3 (AP3) in the epidermis and internal cell layers of developing flowers. This chain is Homeobox-leucine zipper protein HDG2, found in Arabidopsis thaliana (Mouse-ear cress).